Reading from the N-terminus, the 405-residue chain is Magnesium-protoporphyrin IX monomethyl ester [oxidative] cyclase, chloroplastic (405 aa).

A chloroplast-targeting transit peptide spans 1–43 (MATEMALVKPISKFSTSSPIFSNSRYGKFTTVRMSSTSQSTTK).

It belongs to the AcsF family. Requires Fe cation as cofactor.

The protein localises to the plastid. It localises to the chloroplast. It catalyses the reaction Mg-protoporphyrin IX 13-monomethyl ester + 3 NADPH + 3 O2 + 2 H(+) = 3,8-divinyl protochlorophyllide a + 3 NADP(+) + 5 H2O. It functions in the pathway porphyrin-containing compound metabolism; chlorophyll biosynthesis. In terms of biological role, catalyzes the formation of the isocyclic ring in chlorophyll biosynthesis. Mediates the cyclase reaction, which results in the formation of divinylprotochlorophyllide (Pchlide) characteristic of all chlorophylls from magnesium-protoporphyrin IX 13-monomethyl ester (MgPMME). The polypeptide is Magnesium-protoporphyrin IX monomethyl ester [oxidative] cyclase, chloroplastic (CRD1) (Gossypium hirsutum (Upland cotton)).